A 569-amino-acid chain; its full sequence is Dihydroxy-acid dehydratase (569 aa).

C61 contacts [2Fe-2S] cluster. D93 provides a ligand contact to Mg(2+). A [2Fe-2S] cluster-binding site is contributed by C134. Residues D135 and K136 each contribute to the Mg(2+) site. K136 carries the N6-carboxylysine modification. C211 contacts [2Fe-2S] cluster. Mg(2+) is bound at residue E462. The Proton acceptor role is filled by S488.

It belongs to the IlvD/Edd family. Homodimer. [2Fe-2S] cluster serves as cofactor. It depends on Mg(2+) as a cofactor.

It catalyses the reaction (2R)-2,3-dihydroxy-3-methylbutanoate = 3-methyl-2-oxobutanoate + H2O. The enzyme catalyses (2R,3R)-2,3-dihydroxy-3-methylpentanoate = (S)-3-methyl-2-oxopentanoate + H2O. The protein operates within amino-acid biosynthesis; L-isoleucine biosynthesis; L-isoleucine from 2-oxobutanoate: step 3/4. Its pathway is amino-acid biosynthesis; L-valine biosynthesis; L-valine from pyruvate: step 3/4. Functionally, functions in the biosynthesis of branched-chain amino acids. Catalyzes the dehydration of (2R,3R)-2,3-dihydroxy-3-methylpentanoate (2,3-dihydroxy-3-methylvalerate) into 2-oxo-3-methylpentanoate (2-oxo-3-methylvalerate) and of (2R)-2,3-dihydroxy-3-methylbutanoate (2,3-dihydroxyisovalerate) into 2-oxo-3-methylbutanoate (2-oxoisovalerate), the penultimate precursor to L-isoleucine and L-valine, respectively. The protein is Dihydroxy-acid dehydratase of Tropheryma whipplei (strain TW08/27) (Whipple's bacillus).